Here is a 598-residue protein sequence, read N- to C-terminus: Torsin-1A-interacting protein 1 (598 aa).

Topologically, residues 1-351 (MAGEGRRAEA…PQNASFVKRN (351 aa)) are nuclear. 2 disordered regions span residues 19 to 254 (VTPR…RSSS) and 267 to 314 (QNFT…IYGS). The residue at position 60 (Ser60) is a Phosphoserine. 2 stretches are compositionally biased toward basic and acidic residues: residues 73–101 (LVDK…EVRE) and 115–124 (RPQEAEEMKT). Ser135, Ser143, Ser154, Ser156, Ser157, and Ser187 each carry phosphoserine. The span at 205–214 (EATSVQQKVN) shows a compositional bias: polar residues. Ser216 bears the Phosphoserine mark. Thr221 carries the post-translational modification Phosphothreonine. Ser227, Ser230, and Ser242 each carry phosphoserine. A compositionally biased stretch (basic and acidic residues) spans 238 to 250 (RSRDSDESGDKTT). Composition is skewed to polar residues over residues 277–287 (SVLSSGYQKTP) and 300–313 (RMQT…SIYG). At Ser320 the chain carries Phosphoserine. The tract at residues 322-341 (LKSELGNQSPSTSSQQVTGQ) is disordered. A Glycyl lysine isopeptide (Lys-Gly) (interchain with G-Cter in SUMO2) cross-link involves residue Lys323. Residues 326–341 (LGNQSPSTSSQQVTGQ) are compositionally biased toward polar residues. A Phosphoserine modification is found at Ser330. The helical transmembrane segment at 352–372 (WWWLLPLIAALASGSFWFFST) threads the bilayer. An interaction with TOR1A region spans residues 371–598 (STPEVETTAV…ENALKRGICL (228 aa)). Topologically, residues 373–598 (PEVETTAVQE…ENALKRGICL (226 aa)) are perinuclear space. Residues 374–450 (EVETTAVQEF…SEQIADAYSS (77 aa)) adopt a coiled-coil conformation. N-linked (GlcNAc...) asparagine glycosylation occurs at Asn414.

Belongs to the TOR1AIP family. Interacts with ATP1B4. Interacts with TOR1A (ATP-bound). Interacts with TOR1B, TOR2A and TOR3A.

Its subcellular location is the nucleus inner membrane. Functionally, required for nuclear membrane integrity. Induces TOR1A and TOR1B ATPase activity and is required for their location on the nuclear membrane. Binds to A- and B-type lamins. Possible role in membrane attachment and assembly of the nuclear lamina. The sequence is that of Torsin-1A-interacting protein 1 (TOR1AIP1) from Pongo abelii (Sumatran orangutan).